A 999-amino-acid chain; its full sequence is Caspase recruitment domain-containing protein 14 (999 aa).

The region spanning 15 to 107 is the CARD domain; sequence DEEMLWDMLE…DVYTLVTGLQ (93 aa). Positions 125–411 form a coiled coil; the sequence is TECLAGAISS…QLRRLQAEAP (287 aa). The segment at 409-565 is maintains the protein in an inactive state; the sequence is EAPGGPKQEA…RRPARKILSQ (157 aa). At Ser541 the chain carries Phosphoserine. The PDZ domain occupies 572 to 655; the sequence is QGDALLEQIG…SCYLSVKINT (84 aa). The Guanylate kinase-like domain maps to 803-986; the sequence is SESCFTLAPY…LLSCVRLAIA (184 aa).

As to quaternary structure, interacts (via CARD domain) with BCL10 (via CARD domain). Forms a complex with MALT1 and BCL10; resulting in the formation of a CBM (CARD14-BLC10-MALT1) complex. Interacts with TRAF2, TRAF3 and TRAF6.

The protein localises to the cytoplasm. In terms of biological role, acts as a scaffolding protein that can activate the inflammatory transcription factor NF-kappa-B and p38/JNK MAP kinase signaling pathways. Forms a signaling complex with BCL10 and MALT1, and activates MALT1 proteolytic activity and inflammatory gene expression. MALT1 is indispensable for CARD14-induced activation of NF-kappa-B and p38/JNK MAP kinases. May play a role in signaling mediated by TRAF2, TRAF3 and TRAF6 and protects cells against apoptosis. The protein is Caspase recruitment domain-containing protein 14 (Card14) of Mus musculus (Mouse).